Reading from the N-terminus, the 53-residue chain is MLSWAITFLIIAIVAAVLGFGGIAGAATGIAKILFIVFLVLFVASFFFGRGRG.

2 helical membrane-spanning segments follow: residues Trp4 to Ala24 and Gly29 to Gly49.

It belongs to the UPF0391 family.

Its subcellular location is the cell membrane. The protein is UPF0391 membrane protein PputGB1_0151 of Pseudomonas putida (strain GB-1).